A 255-amino-acid chain; its full sequence is Ribonuclease PH (255 aa).

Residues arginine 86 and 124–126 each bind phosphate; that span reads GTR.

The protein belongs to the RNase PH family. As to quaternary structure, homohexameric ring arranged as a trimer of dimers.

It carries out the reaction tRNA(n+1) + phosphate = tRNA(n) + a ribonucleoside 5'-diphosphate. Functionally, phosphorolytic 3'-5' exoribonuclease that plays an important role in tRNA 3'-end maturation. Removes nucleotide residues following the 3'-CCA terminus of tRNAs; can also add nucleotides to the ends of RNA molecules by using nucleoside diphosphates as substrates, but this may not be physiologically important. Probably plays a role in initiation of 16S rRNA degradation (leading to ribosome degradation) during starvation. The chain is Ribonuclease PH from Geobacillus sp. (strain WCH70).